A 1009-amino-acid chain; its full sequence is Type VII secretion system accessory factor EsaA (1009 aa).

The next 6 helical transmembrane spans lie at isoleucine 7 to valine 27, isoleucine 822 to phenylalanine 842, alanine 869 to isoleucine 889, lysine 903 to leucine 923, serine 928 to leucine 948, and isoleucine 979 to phenylalanine 999.

It belongs to the EsaA family. Homodimer. Interacts with EssB.

The protein resides in the cell membrane. In terms of biological role, component of the type VII secretion system (Ess). Provides together with EssB and other components such as EssC and EssE a secretion platform across the cytoplasmic membrane in the host. The sequence is that of Type VII secretion system accessory factor EsaA from Staphylococcus aureus (strain MRSA252).